A 1897-amino-acid chain; its full sequence is MDNVISNIQTSLHEVHGRFETSGLNLTSLTSRVSALESGIDEDFSGQLSLKADKNEVAKFTSNSNVVTSYSVSQLGAKINNLEISDDNLQSSKVNKTRVSIALDDNGNDISDYTLSQEGLGNKLKVMDNEIGLRALTSRIASFTRDGVLTNLSSVELGARLIATESNADTRALKSEVSSHTDAENVTTTYGVTSLGAELHRIAVAVNSLDTYVLKTEVSRLESNGVVVPEYTLTQTELGAKLKNIVDSISNFVVNTQVSKNYDEGTLNYELNAYTLSDYELGAMLERFDTTHLLKSQVSKRYVLNADGSVSNDFNSDYTLSDFELGTKLFDIDTLLNTKISGEEVSINTSDPAYTLNQSELGTLLKTLTGRIDLVSPADADSSIFALKTSVSTHASNTAYTLSTTALATKLESMDSLLSSHGTLIDSKASISNMNERALQSRVSLKFINNDGVTIDEKFTCSVLELGSLLFNMDAATEAIARNYVTDEELAAAVATAVATTGALTSTSLLTTTVSTITKGGSSVVRTAADLARAVFGGGDSDDDDDPPPPVFIYRSEGIFRPANWGSDGNVDGYSRPMIEGRENIYASDGTAQDLHSYIINLVAGNAKVFYRDVSYTSKIRLLGSSGSADDKAAQYGPPASTSYFFPAPASLATVEAGLSWGSSTTRTQSDGTTLSGYTGGIHVLSCFGTSRFEGRSESRKVVWLTGAGTAASSTLDAKLAFDGTGGDAPIHVFGESTTKYGLDLHDAGLVMRNSQSNAKIDIKYHSSNLVFASLTPNVIPASPDILESILTIDSSANSVGIAGGASSQYKLYVHGGANFTSGITSSSASITGNNNSIPSLSISNTTVGAKKEFKMSTDQDGLIIEYGTATSGVVVMDTRISMNDTFTTVDSVGTNSGLEVVGKLGNKASMVLRHMPNSDNTKGTITLGRYLSIKTDLDASRLYTGYTSLDATELIYMDNSNVIVKGDLSVSGNISLIDTSVTPNTTTNIVSGISTALGRVSTLINGGDLSMLRPDGTSIVVRAANIESIGHPAYTVTDEQGVVTSVERTGLFLRPDSFAVDDQIDARLTSVGLTEGDGNENNPLTLNVYTIPQIDGIIAEGHVAGSVSRIIFSSSETLGSRTFPSVAITPINNPFITNATITNTIVGIKRVTVSGNSNEQGSGYVAGDTITISDSFGTGTNAVFTVVNASSGGVDGGSTSLTITNPGAYTSISGTPIVIVEENPTYPAVTGITQQSSSGSGTGVTFSVELSVISVDIFNAGKGYVTSPSVVVSGTYVDTVSNTTTTSGIQSAVAVLHTTSNVTVLDSRFSKAATLSISNTATQLTSALNGYVSTSDLGDELANYYNIDEIVEGFAPIAAPGETYAYLSTTSLENYQTRAASNILYQAKETADNAYIRASDLTASGTGFYDKTTSDERYQAQPASGESFALASSLVNLVDTSTTALTNYSTTNEASTLYQAKEDLNDPYVLRSTVSLDNYDTTTTINEKIAGVSSHFTKSGNNITYNYAGNVGIGGTPNTKLEVYGSIQALPITDTSCVFGNARVGGGAYAGYAHFTHAAINPTHFGNYALLQYSSGHTFLNCSAGSGVGLSFRKNNADWMEYQGNGLLYVTSGNTRYISYIGFQYNPSGLAAGIMAGTGNIVVSMKVLYAIECQRILVVSDERVKTNIRDVNDHEALDIIRLIKPKKFEYIDKESAGPGTIYGFIAQDIIQHVPECVKKGPGVIANIMDTARVCNGRTLIFERFDTSNLKGVNGTIQVLDVDGKNHDVIVETILDSRTVIINKDLSAYTGSVDENGVPQKVKHTTTLTQSEYDAYEDKSDIVKDGDTYTRTEYSNVGDNVFVRGEHVDDFHTMDKDHIIAITTAALQEIDRQLQLEKAKVISLESRLSALELKFGV.

One can recognise a Peptidase S74 domain in the interval 1661-1888; it reads SDERVKTNIR…AKVISLESRL (228 aa). The stretch at 1865–1894 forms a coiled coil; it reads AALQEIDRQLQLEKAKVISLESRLSALELK.

This is an uncharacterized protein from Micromonas pusilla (Picoplanktonic green alga).